Reading from the N-terminus, the 193-residue chain is Orotate phosphoribosyltransferase (193 aa).

5-phospho-alpha-D-ribose 1-diphosphate-binding positions include arginine 85, lysine 89, histidine 91, and 111–119 (DDVLTTGKS). Orotate contacts are provided by threonine 115 and arginine 143.

Belongs to the purine/pyrimidine phosphoribosyltransferase family. PyrE subfamily. Homodimer. Mg(2+) is required as a cofactor.

The catalysed reaction is orotidine 5'-phosphate + diphosphate = orotate + 5-phospho-alpha-D-ribose 1-diphosphate. It participates in pyrimidine metabolism; UMP biosynthesis via de novo pathway; UMP from orotate: step 1/2. In terms of biological role, catalyzes the transfer of a ribosyl phosphate group from 5-phosphoribose 1-diphosphate to orotate, leading to the formation of orotidine monophosphate (OMP). The sequence is that of Orotate phosphoribosyltransferase from Pyrobaculum islandicum (strain DSM 4184 / JCM 9189 / GEO3).